Here is a 446-residue protein sequence, read N- to C-terminus: UDP-N-acetylmuramoylalanine--D-glutamate ligase (446 aa).

115-121 (GSNGKST) provides a ligand contact to ATP.

Belongs to the MurCDEF family.

The protein resides in the cytoplasm. The catalysed reaction is UDP-N-acetyl-alpha-D-muramoyl-L-alanine + D-glutamate + ATP = UDP-N-acetyl-alpha-D-muramoyl-L-alanyl-D-glutamate + ADP + phosphate + H(+). Its pathway is cell wall biogenesis; peptidoglycan biosynthesis. In terms of biological role, cell wall formation. Catalyzes the addition of glutamate to the nucleotide precursor UDP-N-acetylmuramoyl-L-alanine (UMA). The protein is UDP-N-acetylmuramoylalanine--D-glutamate ligase of Hahella chejuensis (strain KCTC 2396).